Consider the following 161-residue polypeptide: Protein-export protein SecB (161 aa).

This sequence belongs to the SecB family. As to quaternary structure, homotetramer, a dimer of dimers. One homotetramer interacts with 1 SecA dimer.

It localises to the cytoplasm. One of the proteins required for the normal export of preproteins out of the cell cytoplasm. It is a molecular chaperone that binds to a subset of precursor proteins, maintaining them in a translocation-competent state. It also specifically binds to its receptor SecA. The polypeptide is Protein-export protein SecB (Shewanella baltica (strain OS223)).